Reading from the N-terminus, the 333-residue chain is Heat shock transcription factor, X-linked member 3 (333 aa).

A disordered region spans residues 1-66 (MASQNTEQEY…QDNSPPEDRN (66 aa)). Low complexity predominate over residues 29–39 (GSSPDPNPDSS). Polar residues predominate over residues 49–60 (AMSQDPGSQDNS). Residues 79–182 (FRLSFPRKLW…PRLLENIQRK (104 aa)) mediate DNA binding. Residues 227 to 275 (QGAPSVQGPSGTQSFRRSGMWSKKSATRHPLGNGPPQEPNGPSWEGTSG) are disordered. Positions 228–242 (GAPSVQGPSGTQSFR) are enriched in polar residues.

Belongs to the HSF family.

It localises to the nucleus. The chain is Heat shock transcription factor, X-linked member 3 from Homo sapiens (Human).